The chain runs to 215 residues: UPF0323 lipoprotein jhp_0217 (215 aa).

A signal peptide spans 1-27 (MKKPYRKISDYAIVGGLSALVMVSIVG). C28 carries the N-palmitoyl cysteine lipid modification. C28 carries S-diacylglycerol cysteine lipidation. Residues 158-169 (QRTYKSPQAYQR) show a composition bias toward polar residues. The disordered stretch occupies residues 158–215 (QRTYKSPQAYQRSQNSFSKSAPSASSMGTASKGQSGFFGSSRPTSSPAISSGTRGFNA). The span at 170 to 183 (SQNSFSKSAPSASS) shows a compositional bias: low complexity. The span at 184-195 (MGTASKGQSGFF) shows a compositional bias: polar residues. The span at 197–208 (SSRPTSSPAISS) shows a compositional bias: low complexity.

Belongs to the UPF0323 family.

Its subcellular location is the cell membrane. The sequence is that of UPF0323 lipoprotein jhp_0217 from Helicobacter pylori (strain J99 / ATCC 700824) (Campylobacter pylori J99).